The sequence spans 172 residues: Protein GrpE (172 aa).

The disordered stretch occupies residues 1–24 (MNQDHPEFDSEDLAQNPPETDPLK).

It belongs to the GrpE family. Homodimer.

Its subcellular location is the cytoplasm. Functionally, participates actively in the response to hyperosmotic and heat shock by preventing the aggregation of stress-denatured proteins, in association with DnaK and GrpE. It is the nucleotide exchange factor for DnaK and may function as a thermosensor. Unfolded proteins bind initially to DnaJ; upon interaction with the DnaJ-bound protein, DnaK hydrolyzes its bound ATP, resulting in the formation of a stable complex. GrpE releases ADP from DnaK; ATP binding to DnaK triggers the release of the substrate protein, thus completing the reaction cycle. Several rounds of ATP-dependent interactions between DnaJ, DnaK and GrpE are required for fully efficient folding. This Xanthomonas oryzae pv. oryzae (strain PXO99A) protein is Protein GrpE.